The following is a 209-amino-acid chain: Nascent polypeptide-associated complex subunit alpha (209 aa).

The segment covering methionine 1–glutamate 21 has biased composition (basic and acidic residues). Disordered regions lie at residues methionine 1–asparagine 51 and glutamine 121–isoleucine 175. The span at histidine 22 to glycine 36 shows a compositional bias: acidic residues. Residues asparagine 49 to alanine 114 form the NAC-A/B domain. The segment covering alanine 127 to aspartate 150 has biased composition (basic and acidic residues). The segment covering lysine 151–aspartate 166 has biased composition (acidic residues). One can recognise a UBA domain in the interval leucine 170–isoleucine 209.

It belongs to the NAC-alpha family. In terms of assembly, part of the nascent polypeptide-associated complex (NAC), consisting of EGD2 and EGD1. NAC associates with ribosomes via EGD1.

Its subcellular location is the cytoplasm. It is found in the nucleus. Component of the nascent polypeptide-associated complex (NAC), a dynamic component of the ribosomal exit tunnel, protecting the emerging polypeptides from interaction with other cytoplasmic proteins to ensure appropriate nascent protein targeting. The NAC complex also promotes mitochondrial protein import by enhancing productive ribosome interactions with the outer mitochondrial membrane and blocks the inappropriate interaction of ribosomes translating non-secretory nascent polypeptides with translocation sites in the membrane of the endoplasmic reticulum. EGD2 may also be involved in transcription regulation. In Gibberella zeae (strain ATCC MYA-4620 / CBS 123657 / FGSC 9075 / NRRL 31084 / PH-1) (Wheat head blight fungus), this protein is Nascent polypeptide-associated complex subunit alpha (EGD2).